A 228-amino-acid chain; its full sequence is General odorant-binding protein 71 (228 aa).

An N-terminal signal peptide occupies residues 1–20 (MCGAIVLLLLVGTSPAPVEG). The tract at residues 50-131 (TMGEWGQRDR…GNSSSSSSST (82 aa)) is disordered. Residues 55 to 72 (GQRDRNGEEQQMMRDYGR) are compositionally biased toward basic and acidic residues. Positions 83-99 (GGQTSGSSSSGSAGEHS) are enriched in low complexity. Residues 111-120 (AGQGGNGTRS) show a composition bias toward gly residues. Low complexity predominate over residues 121 to 131 (GGNSSSSSSST). 2 disulfides stabilise this stretch: Cys138-Cys199 and Cys185-Cys208.

The protein belongs to the PBP/GOBP family.

The protein resides in the secreted. Its function is as follows. Present in the aqueous fluid surrounding olfactory sensory dendrites and are thought to aid in the capture and transport of hydrophobic odorants into and through this fluid. The chain is General odorant-binding protein 71 (Obp71) from Anopheles gambiae (African malaria mosquito).